Consider the following 445-residue polypeptide: GTPase Der (445 aa).

2 EngA-type G domains span residues 3 to 167 (PVIA…YAGQ) and 180 to 353 (IKIA…AAAM). Residues 9-16 (GRPNVGKS), 56-60 (DTGGF), 119-122 (NKAE), 186-193 (GRPNVGKS), 233-237 (DTAGL), and 298-301 (NKWD) each bind GTP. The 85-residue stretch at 354–438 (SKLPTPKLTR…PLRIEFRSSN (85 aa)) folds into the KH-like domain.

It belongs to the TRAFAC class TrmE-Era-EngA-EngB-Septin-like GTPase superfamily. EngA (Der) GTPase family. As to quaternary structure, associates with the 50S ribosomal subunit.

In terms of biological role, GTPase that plays an essential role in the late steps of ribosome biogenesis. The protein is GTPase Der of Burkholderia cenocepacia (strain ATCC BAA-245 / DSM 16553 / LMG 16656 / NCTC 13227 / J2315 / CF5610) (Burkholderia cepacia (strain J2315)).